The chain runs to 618 residues: Vacuolar-sorting receptor 5 (618 aa).

The signal sequence occupies residues 1 to 23; it reads MSPSNKGTVLALILALTMVVVNG. Residues 24 to 563 lie on the Lumenal side of the membrane; that stretch reads FSSRFFVEKS…IERRSGSRSR (540 aa). Residues 58–164 enclose the PA domain; it reads KYGGFMIGSV…SFGDSLKKAL (107 aa). N-linked (GlcNAc...) asparagine glycans are attached at residues Asn-81, Asn-293, and Asn-430. EGF-like domains are found at residues 412–462 and 465–511; these read ETNE…TSCK and GPAR…LKCE. Cystine bridges form between Cys-416-Cys-434, Cys-423-Cys-443, Cys-445-Cys-461, Cys-469-Cys-489, Cys-476-Cys-497, Cys-499-Cys-510, and Cys-540-Cys-553. An EGF-like 3; calcium-binding domain is found at 512–554; that stretch reads DIDECKEKSACKCDGCKCKNNWGGYECKCSNNSIYMKEEDTCI. Residue Asn-542 is glycosylated (N-linked (GlcNAc...) asparagine). A helical transmembrane segment spans residues 564–584; that stretch reads GLFTIVVLTAIAGISLGAYIF. The Cytoplasmic portion of the chain corresponds to 585-618; that stretch reads YKYHLQSYMDSEIVSIMSQYIPLDSQSINQDSFK. The Tyrosine-based internalization motif signature appears at 604–607; that stretch reads YIPL.

The protein belongs to the VSR (BP-80) family. Expressed in seedlings, roots, leaves, flowers and siliques.

Its subcellular location is the membrane. It is found in the golgi apparatus membrane. The protein localises to the cytoplasmic vesicle. It localises to the clathrin-coated vesicle membrane. The protein resides in the prevacuolar compartment membrane. Vacuolar-sorting receptor (VSR) involved in clathrin-coated vesicles sorting from Golgi apparatus to vacuoles. This chain is Vacuolar-sorting receptor 5 (VSR5), found in Arabidopsis thaliana (Mouse-ear cress).